The following is a 690-amino-acid chain: Elongation factor G (690 aa).

Residues 8-283 enclose the tr-type G domain; that stretch reads SRCRNIGIMA…AVVDFLPSPS (276 aa). Residues 17–24, 81–85, and 135–138 contribute to the GTP site; these read AHIDAGKT, DTPGH, and NKMD.

Belongs to the TRAFAC class translation factor GTPase superfamily. Classic translation factor GTPase family. EF-G/EF-2 subfamily.

It is found in the cytoplasm. In terms of biological role, catalyzes the GTP-dependent ribosomal translocation step during translation elongation. During this step, the ribosome changes from the pre-translocational (PRE) to the post-translocational (POST) state as the newly formed A-site-bound peptidyl-tRNA and P-site-bound deacylated tRNA move to the P and E sites, respectively. Catalyzes the coordinated movement of the two tRNA molecules, the mRNA and conformational changes in the ribosome. This Anaplasma marginale (strain Florida) protein is Elongation factor G.